A 202-amino-acid chain; its full sequence is Probable adenylyl-sulfate kinase (202 aa).

36 to 43 provides a ligand contact to ATP; it reads GLSGSGKS. The Phosphoserine intermediate role is filled by Ser110.

The protein belongs to the APS kinase family.

It carries out the reaction adenosine 5'-phosphosulfate + ATP = 3'-phosphoadenylyl sulfate + ADP + H(+). The protein operates within sulfur metabolism; hydrogen sulfide biosynthesis; sulfite from sulfate: step 2/3. Its function is as follows. Catalyzes the synthesis of activated sulfate. This chain is Probable adenylyl-sulfate kinase, found in Halalkalibacterium halodurans (strain ATCC BAA-125 / DSM 18197 / FERM 7344 / JCM 9153 / C-125) (Bacillus halodurans).